A 140-amino-acid chain; its full sequence is MAHSLVCPETVSRVSSVLNRNTRQFGKKHLFDQDEETCWNSDQGPSQWVTLEFPQCICVSQLQIQFQGGFSSRQGRLEGSLGSEALSKIVDFYPEDNNSLQTFPVPPAEVDRLKVTFEDTTDFFGRVVIYHLRVLGKKKE.

This sequence belongs to the NR2C2AP family. In terms of assembly, interacts with NR2C2/TR4.

The protein localises to the nucleus. In terms of biological role, may act as a repressor of NR2C2-mediated transactivation by suppressing the binding between NR2C2/TR4 and the TR4-response element in target genes. The chain is Nuclear receptor 2C2-associated protein (NR2C2AP) from Bos taurus (Bovine).